We begin with the raw amino-acid sequence, 600 residues long: Elongation factor 4 (600 aa).

One can recognise a tr-type G domain in the interval 5–187 (SNIRNFSIIA…ALVERIPAPT (183 aa)). GTP is bound by residues 17–22 (DHGKST) and 134–137 (NKID).

This sequence belongs to the TRAFAC class translation factor GTPase superfamily. Classic translation factor GTPase family. LepA subfamily.

It is found in the cell inner membrane. The catalysed reaction is GTP + H2O = GDP + phosphate + H(+). In terms of biological role, required for accurate and efficient protein synthesis under certain stress conditions. May act as a fidelity factor of the translation reaction, by catalyzing a one-codon backward translocation of tRNAs on improperly translocated ribosomes. Back-translocation proceeds from a post-translocation (POST) complex to a pre-translocation (PRE) complex, thus giving elongation factor G a second chance to translocate the tRNAs correctly. Binds to ribosomes in a GTP-dependent manner. In Psychrobacter sp. (strain PRwf-1), this protein is Elongation factor 4.